The following is a 264-amino-acid chain: Major prion protein (264 aa).

The first 24 residues, 1–24 (MVKSHIGSWILVLFVAMWSDVGLC), serve as a signal peptide directing secretion. An interaction with ADGRG6 region spans residues 25–41 (KKRPKPGGGWNTGGSRY). Residues 25-241 (KKRPKPGGGW…ESQAYYQRGA (217 aa)) form an interaction with GRB2, ERI3 and SYN1 region. A disordered region spans residues 28-119 (PKPGGGWNTG…WNKPSKPKTN (92 aa)). 6 consecutive repeat copies span residues 54-62 (PQGGGGWGQ), 63-70 (PHGGGWGQ), 71-78 (PHGGGWGQ), 79-86 (PHGGGWGQ), 87-94 (PHGGGWGQ), and 95-103 (PHGGGGWGQ). The interval 54–103 (PQGGGGWGQPHGGGWGQPHGGGWGQPHGGGWGQPHGGGWGQPHGGGGWGQ) is 6 X 8 AA tandem repeats of P-H-G-G-G-W-G-Q. A compositionally biased stretch (gly residues) spans 55–107 (QGGGGWGQPHGGGWGQPHGGGWGQPHGGGWGQPHGGGWGQPHGGGGWGQGGTH). Cu(2+) is bound by residues H72, G73, G74, H80, G81, G82, H88, G89, G90, H96, G98, and G99. C190 and C225 are oxidised to a cystine. 2 N-linked (GlcNAc...) asparagine glycosylation sites follow: N192 and N208. A lipid anchor (GPI-anchor amidated alanine) is attached at A241. Residues 242–264 (SVILFSSPPVILLISFLIFLIVG) constitute a propeptide, removed in mature form.

It belongs to the prion family. As to quaternary structure, monomer and homodimer. Has a tendency to aggregate into amyloid fibrils containing a cross-beta spine, formed by a steric zipper of superposed beta-strands. Soluble oligomers may represent an intermediate stage on the path to fibril formation. Copper binding may promote oligomerization. Interacts with GRB2, APP, ERI3/PRNPIP and SYN1. Mislocalized cytosolically exposed PrP interacts with MGRN1; this interaction alters MGRN1 subcellular location and causes lysosomal enlargement. Interacts with APP. Interacts with KIAA1191. Interacts with ADGRG6.

The protein resides in the cell membrane. The protein localises to the golgi apparatus. Its primary physiological function is unclear. May play a role in neuronal development and synaptic plasticity. May be required for neuronal myelin sheath maintenance. May promote myelin homeostasis through acting as an agonist for ADGRG6 receptor. May play a role in iron uptake and iron homeostasis. Soluble oligomers are toxic to cultured neuroblastoma cells and induce apoptosis (in vitro). Association with GPC1 (via its heparan sulfate chains) targets PRNP to lipid rafts. Also provides Cu(2+) or Zn(2+) for the ascorbate-mediated GPC1 deaminase degradation of its heparan sulfate side chains. In Bos indicus x Bos taurus (Hybrid cattle), this protein is Major prion protein (PRNP).